The following is a 383-amino-acid chain: Queuine tRNA-ribosyltransferase (383 aa).

Aspartate 90 functions as the Proton acceptor in the catalytic mechanism. Substrate is bound by residues 90-94, aspartate 144, glutamine 193, and glycine 227; that span reads DSGGF. An RNA binding region spans residues 258–264; it reads GVGTPED. Aspartate 277 serves as the catalytic Nucleophile. Residues 282-286 form an RNA binding; important for wobble base 34 recognition region; that stretch reads TRNAR. Cysteine 315, cysteine 317, cysteine 320, and histidine 346 together coordinate Zn(2+).

This sequence belongs to the queuine tRNA-ribosyltransferase family. In terms of assembly, homodimer. Within each dimer, one monomer is responsible for RNA recognition and catalysis, while the other monomer binds to the replacement base PreQ1. Zn(2+) is required as a cofactor.

The catalysed reaction is 7-aminomethyl-7-carbaguanine + guanosine(34) in tRNA = 7-aminomethyl-7-carbaguanosine(34) in tRNA + guanine. The protein operates within tRNA modification; tRNA-queuosine biosynthesis. Functionally, catalyzes the base-exchange of a guanine (G) residue with the queuine precursor 7-aminomethyl-7-deazaguanine (PreQ1) at position 34 (anticodon wobble position) in tRNAs with GU(N) anticodons (tRNA-Asp, -Asn, -His and -Tyr). Catalysis occurs through a double-displacement mechanism. The nucleophile active site attacks the C1' of nucleotide 34 to detach the guanine base from the RNA, forming a covalent enzyme-RNA intermediate. The proton acceptor active site deprotonates the incoming PreQ1, allowing a nucleophilic attack on the C1' of the ribose to form the product. After dissociation, two additional enzymatic reactions on the tRNA convert PreQ1 to queuine (Q), resulting in the hypermodified nucleoside queuosine (7-(((4,5-cis-dihydroxy-2-cyclopenten-1-yl)amino)methyl)-7-deazaguanosine). In Ralstonia nicotianae (strain ATCC BAA-1114 / GMI1000) (Ralstonia solanacearum), this protein is Queuine tRNA-ribosyltransferase.